The primary structure comprises 657 residues: PAN2-PAN3 deadenylation complex subunit PAN3 (657 aa).

Disordered stretches follow at residues 1-29, 52-98, and 115-135; these read MASA…HAKD, HDPS…SATI, and SRSN…EWSI. Residues 27–55 form a C3H1-type zinc finger; it reads AKDTLCRNVTIYGRCRYEDKGCVFNHDPS. Residues 52 to 67 are compositionally biased toward basic and acidic residues; the sequence is HDPSRVNDAQHPERSS. Composition is skewed to polar residues over residues 75-98 and 115-132; these read DSPS…SATI and SRSN…STPE. The pseudokinase domain stretch occupies residues 259–521; sequence QTLPNSQLPT…TIDIFISGIS (263 aa). ATP is bound by residues arginine 311, 360 to 367, and 421 to 422; these read DYHPLSKT and SK. Residues 522-560 adopt a coiled-coil conformation; that stretch reads SQLMSTFDSSLHLDDQLISDLSRELENARLVRLLTKLNF. The interval 561-657 is knob domain; the sequence is INERPEYEHD…QALLKPARRI (97 aa).

This sequence belongs to the protein kinase superfamily. PAN3 family. Homodimer. Forms a heterotrimer with a catalytic subunit PAN2 to form the poly(A)-nuclease (PAN) deadenylation complex. Interacts (via PAM-2 motif) with poly(A)-binding protein PAB1 (via PABC domain), conferring substrate specificity of the enzyme complex.

The protein localises to the cytoplasm. Regulatory subunit of the poly(A)-nuclease (PAN) deadenylation complex, one of two cytoplasmic mRNA deadenylases involved in mRNA turnover. PAN specifically shortens poly(A) tails of RNA and the activity is stimulated by poly(A)-binding protein PAB1. PAN deadenylation is followed by rapid degradation of the shortened mRNA tails by the CCR4-NOT complex. Deadenylated mRNAs are then degraded by two alternative mechanisms, namely exosome-mediated 3'-5' exonucleolytic degradation, or deadenylation-dependent mRNA decaping and subsequent 5'-3' exonucleolytic degradation by XRN1. May also be involved in post-transcriptional maturation of mRNA poly(A) tails. PAN3 acts as a positive regulator for PAN activity, recruiting the catalytic subunit PAN2 to mRNA via its interaction with RNA and with PAB1. This Coccidioides immitis (strain RS) (Valley fever fungus) protein is PAN2-PAN3 deadenylation complex subunit PAN3.